A 700-amino-acid polypeptide reads, in one-letter code: GCTDVLCCVIFVIVILGYIVLGTVAWMHGDPRKVVYPTDSYGQFCGQQETPNANKAILFYFNILQCANPSVLINLQCPTTQLCVSKCPDRFATYIDMQYSYRRNKGSWEYYKQFCKPGFNNPDKPISQVLRDEDCPSMIVPSRPFLQRCFPDFITRNGTLTVANQTSFKDGHGKIRSVVDLRDAANGITSLLDAKEVGTKIFEDYASSWFWILIGLVISMLVSLVFILLLRFTAGVLFWLVIFGVIAAVGYGIWHCYWEYSSLKGKPDSDVTISDIGFQTDFRVYLQLSQTWLIFMTSLAVIEAIIILVLIFLRNRVRIAIALLKEGSKAIGCIMSTLFYPIITFLLLALCIAYWAVTAVFLASSGEAVYKVMSTLPDCKYTNLTCDPETFSQSNVTKLCPGSQCTFAFYGGESLYHRYIFVLQLCNLLVFLWLVNFTIALGQCTLAGAFAAYYWALRKPADIPPCPLASSFGRALRYHTGSLAFGALILSIVQFIRIILEYLDHKLKGAHNAFTRFLLCCLKCCFWCLEHFIKFMNRNAYIMISIYGKNFCTSARDAFFLLMRNVMRVAVLDKVTDFLLFLGKLLISGSVGVLAFFFFTRQIPVIQEEVPSLNYYWVPLLTVIFGSYMIAHGFFNVYAMCVDTLFLCFLLDLEKNDGSATRPYYMCSSLRAILNKKNQKRPKETKRGRKQKKEQPKSRH.

Over 1–4 (GCTD) the chain is Cytoplasmic. Residues 5 to 25 (VLCCVIFVIVILGYIVLGTVA) traverse the membrane as a helical segment. Over 26 to 209 (WMHGDPRKVV…KIFEDYASSW (184 aa)) the chain is Extracellular. Asn157 and Asn164 each carry an N-linked (GlcNAc...) asparagine glycan. Residues 210 to 230 (FWILIGLVISMLVSLVFILLL) form a helical membrane-spanning segment. The Cytoplasmic portion of the chain corresponds to 231-233 (RFT). Residues 234–254 (AGVLFWLVIFGVIAAVGYGIW) form a helical membrane-spanning segment. The Extracellular segment spans residues 255–292 (HCYWEYSSLKGKPDSDVTISDIGFQTDFRVYLQLSQTW). A helical transmembrane segment spans residues 293-313 (LIFMTSLAVIEAIIILVLIFL). Topologically, residues 314–341 (RNRVRIAIALLKEGSKAIGCIMSTLFYP) are cytoplasmic. The chain crosses the membrane as a helical span at residues 342-362 (IITFLLLALCIAYWAVTAVFL). Residues 363 to 432 (ASSGEAVYKV…LQLCNLLVFL (70 aa)) are Extracellular-facing. 2 N-linked (GlcNAc...) asparagine glycosylation sites follow: Asn383 and Asn395. The helical transmembrane segment at 433–455 (WLVNFTIALGQCTLAGAFAAYYW) threads the bilayer. Over 456–482 (ALRKPADIPPCPLASSFGRALRYHTGS) the chain is Cytoplasmic. A helical membrane pass occupies residues 483–503 (LAFGALILSIVQFIRIILEYL). The Extracellular portion of the chain corresponds to 504–541 (DHKLKGAHNAFTRFLLCCLKCCFWCLEHFIKFMNRNAY). A helical transmembrane segment spans residues 542–562 (IMISIYGKNFCTSARDAFFLL). At 563–577 (MRNVMRVAVLDKVTD) the chain is on the cytoplasmic side. Residues 578-598 (FLLFLGKLLISGSVGVLAFFF) traverse the membrane as a helical segment. The Extracellular portion of the chain corresponds to 599-616 (FTRQIPVIQEEVPSLNYY). Residues 617–637 (WVPLLTVIFGSYMIAHGFFNV) form a helical membrane-spanning segment. At 638–687 (YAMCVDTLFLCFLLDLEKNDGSATRPYYMCSSLRAILNKKNQKRPKETKR) the chain is on the cytoplasmic side. Positions 676–700 (KKNQKRPKETKRGRKQKKEQPKSRH) are disordered. A compositionally biased stretch (basic residues) spans 677 to 692 (KNQKRPKETKRGRKQK).

Belongs to the CTL (choline transporter-like) family.

It is found in the cell membrane. The catalysed reaction is choline(out) + n H(+)(in) = choline(in) + n H(+)(out). Choline/H+ antiporter. The chain is Choline transporter-like protein 5-B (slc44a5b) from Danio rerio (Zebrafish).